The primary structure comprises 118 residues: V-type proton ATPase subunit G 1 (118 aa).

Residue Ala-2 is modified to N-acetylalanine. The disordered stretch occupies residues 55–90 (FQSKQQAAMGSQGNLSAEVEQATRRQVQGMQSSQQR). Composition is skewed to polar residues over residues 56-69 (QSKQ…QGNL) and 78-89 (RRQVQGMQSSQQ).

The protein belongs to the V-ATPase G subunit family. In terms of assembly, V-ATPase is a heteromultimeric enzyme made up of two complexes: the ATP-hydrolytic V1 complex and the proton translocation V0 complex. The V1 complex consists of three catalytic AB heterodimers that form a heterohexamer, three peripheral stalks each consisting of EG heterodimers, one central rotor including subunits D and F, and the regulatory subunits C and H. The proton translocation complex V0 consists of the proton transport subunit a, a ring of proteolipid subunits c9c'', rotary subunit d, subunits e and f, and the accessory subunits ATP6AP1/Ac45 and ATP6AP2/PRR.

The protein resides in the apical cell membrane. In terms of biological role, subunit of the V1 complex of vacuolar(H+)-ATPase (V-ATPase), a multisubunit enzyme composed of a peripheral complex (V1) that hydrolyzes ATP and a membrane integral complex (V0) that translocates protons. V-ATPase is responsible for acidifying and maintaining the pH of intracellular compartments and in some cell types, is targeted to the plasma membrane, where it is responsible for acidifying the extracellular environment. In aerobic conditions, involved in intracellular iron homeostasis, thus triggering the activity of Fe(2+) prolyl hydroxylase (PHD) enzymes, and leading to HIF1A hydroxylation and subsequent proteasomal degradation. This is V-type proton ATPase subunit G 1 (ATP6V1G1) from Canis lupus familiaris (Dog).